Here is a 148-residue protein sequence, read N- to C-terminus: Cysteine proteinase inhibitor 5 (148 aa).

The signal sequence occupies residues 1–25; it reads MASKLYYAVAPLVLVLLLLAPLSSA. The short motif at 99–103 is the Secondary area of contact element; it reads QVVSG.

It belongs to the cystatin family. Phytocystatin subfamily.

It localises to the secreted. Its function is as follows. Specific inhibitor of cysteine proteinases. Probably involved in the regulation of endogenous processes and in defense against pests and pathogens. The chain is Cysteine proteinase inhibitor 5 from Oryza sativa subsp. japonica (Rice).